Consider the following 436-residue polypeptide: 3-ketoacyl-CoA thiolase (436 aa).

Cys99 (acyl-thioester intermediate) is an active-site residue. Residues His392 and Cys422 each act as proton acceptor in the active site.

This sequence belongs to the thiolase-like superfamily. Thiolase family. In terms of assembly, heterotetramer of two alpha chains (FadJ) and two beta chains (FadI).

It is found in the cytoplasm. It carries out the reaction an acyl-CoA + acetyl-CoA = a 3-oxoacyl-CoA + CoA. Its pathway is lipid metabolism; fatty acid beta-oxidation. Its function is as follows. Catalyzes the final step of fatty acid oxidation in which acetyl-CoA is released and the CoA ester of a fatty acid two carbons shorter is formed. The polypeptide is 3-ketoacyl-CoA thiolase (Shewanella loihica (strain ATCC BAA-1088 / PV-4)).